A 103-amino-acid chain; its full sequence is UPF0145 protein CYB_1351 (103 aa).

This sequence belongs to the UPF0145 family.

The protein is UPF0145 protein CYB_1351 of Synechococcus sp. (strain JA-2-3B'a(2-13)) (Cyanobacteria bacterium Yellowstone B-Prime).